A 392-amino-acid chain; its full sequence is Queuine tRNA-ribosyltransferase (392 aa).

Residue aspartate 93 is the Proton acceptor of the active site. Substrate is bound by residues 93–97, aspartate 147, glutamine 189, and glycine 216; that span reads DSGGY. The RNA binding stretch occupies residues 247–253; sequence GVGAPED. The Nucleophile role is filled by aspartate 266. The RNA binding; important for wobble base 34 recognition stretch occupies residues 271–275; the sequence is TRVAR. Zn(2+) is bound by residues cysteine 304, cysteine 306, cysteine 309, and histidine 335.

This sequence belongs to the queuine tRNA-ribosyltransferase family. Homodimer. Within each dimer, one monomer is responsible for RNA recognition and catalysis, while the other monomer binds to the replacement base PreQ1. Requires Zn(2+) as cofactor.

The enzyme catalyses 7-aminomethyl-7-carbaguanine + guanosine(34) in tRNA = 7-aminomethyl-7-carbaguanosine(34) in tRNA + guanine. It participates in tRNA modification; tRNA-queuosine biosynthesis. Its function is as follows. Catalyzes the base-exchange of a guanine (G) residue with the queuine precursor 7-aminomethyl-7-deazaguanine (PreQ1) at position 34 (anticodon wobble position) in tRNAs with GU(N) anticodons (tRNA-Asp, -Asn, -His and -Tyr). Catalysis occurs through a double-displacement mechanism. The nucleophile active site attacks the C1' of nucleotide 34 to detach the guanine base from the RNA, forming a covalent enzyme-RNA intermediate. The proton acceptor active site deprotonates the incoming PreQ1, allowing a nucleophilic attack on the C1' of the ribose to form the product. After dissociation, two additional enzymatic reactions on the tRNA convert PreQ1 to queuine (Q), resulting in the hypermodified nucleoside queuosine (7-(((4,5-cis-dihydroxy-2-cyclopenten-1-yl)amino)methyl)-7-deazaguanosine). This Dehalococcoides mccartyi (strain ATCC BAA-2100 / JCM 16839 / KCTC 5957 / BAV1) protein is Queuine tRNA-ribosyltransferase.